The sequence spans 875 residues: Translation initiation factor IF-2 (875 aa).

Disordered regions lie at residues 123 to 204 and 240 to 278; these read EKEK…EKPK and ETKE…PVET. Positions 240-252 are enriched in basic and acidic residues; sequence ETKEEKAELEALR. Residues 259–268 are compositionally biased toward basic residues; sequence PKKKKKKKKK. Residues 269 to 278 show a composition bias toward basic and acidic residues; sequence KEEEKAPVET. Positions 379 to 547 constitute a tr-type G domain; it reads ERPPVVTVMG…NILLVSEILE (169 aa). A G1 region spans residues 388-395; sequence GHVDHGKT. 388–395 is a binding site for GTP; it reads GHVDHGKT. The G2 stretch occupies residues 413 to 417; the sequence is GITQH. Positions 435–438 are G3; sequence DTPG. GTP is bound by residues 435-439 and 489-492; these read DTPGH and NKID. The tract at residues 489-492 is G4; sequence NKID. Residues 525–527 are G5; the sequence is SAK.

This sequence belongs to the TRAFAC class translation factor GTPase superfamily. Classic translation factor GTPase family. IF-2 subfamily.

The protein localises to the cytoplasm. Functionally, one of the essential components for the initiation of protein synthesis. Protects formylmethionyl-tRNA from spontaneous hydrolysis and promotes its binding to the 30S ribosomal subunits. Also involved in the hydrolysis of GTP during the formation of the 70S ribosomal complex. The sequence is that of Translation initiation factor IF-2 from Persephonella marina (strain DSM 14350 / EX-H1).